The following is a 527-amino-acid chain: Bifunctional purine biosynthesis protein PurH (527 aa).

An MGS-like domain is found at 9–156 (MARKPIRRAL…KNHPSVAVVT (148 aa)).

Belongs to the PurH family.

The catalysed reaction is (6R)-10-formyltetrahydrofolate + 5-amino-1-(5-phospho-beta-D-ribosyl)imidazole-4-carboxamide = 5-formamido-1-(5-phospho-D-ribosyl)imidazole-4-carboxamide + (6S)-5,6,7,8-tetrahydrofolate. It carries out the reaction IMP + H2O = 5-formamido-1-(5-phospho-D-ribosyl)imidazole-4-carboxamide. It participates in purine metabolism; IMP biosynthesis via de novo pathway; 5-formamido-1-(5-phospho-D-ribosyl)imidazole-4-carboxamide from 5-amino-1-(5-phospho-D-ribosyl)imidazole-4-carboxamide (10-formyl THF route): step 1/1. Its pathway is purine metabolism; IMP biosynthesis via de novo pathway; IMP from 5-formamido-1-(5-phospho-D-ribosyl)imidazole-4-carboxamide: step 1/1. The chain is Bifunctional purine biosynthesis protein PurH from Mycobacterium leprae (strain Br4923).